A 318-amino-acid polypeptide reads, in one-letter code: Homoserine kinase (318 aa).

97–107 (PIGSGLGSSAC) is a binding site for ATP.

Belongs to the GHMP kinase family. Homoserine kinase subfamily.

It is found in the cytoplasm. It carries out the reaction L-homoserine + ATP = O-phospho-L-homoserine + ADP + H(+). It functions in the pathway amino-acid biosynthesis; L-threonine biosynthesis; L-threonine from L-aspartate: step 4/5. In terms of biological role, catalyzes the ATP-dependent phosphorylation of L-homoserine to L-homoserine phosphate. The polypeptide is Homoserine kinase (Vibrio parahaemolyticus serotype O3:K6 (strain RIMD 2210633)).